The primary structure comprises 344 residues: Methionine import ATP-binding protein MetN (344 aa).

Positions 2–241 (IKLEKISKIF…PQTQLAKEFI (240 aa)) constitute an ABC transporter domain. Residue 38–45 (GASGAGKS) participates in ATP binding.

It belongs to the ABC transporter superfamily. Methionine importer (TC 3.A.1.24) family. In terms of assembly, the complex is composed of two ATP-binding proteins (MetN), two transmembrane proteins (MetI) and a solute-binding protein (MetQ).

The protein resides in the cell inner membrane. It carries out the reaction L-methionine(out) + ATP + H2O = L-methionine(in) + ADP + phosphate + H(+). The catalysed reaction is D-methionine(out) + ATP + H2O = D-methionine(in) + ADP + phosphate + H(+). Its function is as follows. Part of the ABC transporter complex MetNIQ involved in methionine import. Responsible for energy coupling to the transport system. The sequence is that of Methionine import ATP-binding protein MetN from Pasteurella multocida (strain Pm70).